We begin with the raw amino-acid sequence, 97 residues long: Co-chaperonin GroES (97 aa).

This sequence belongs to the GroES chaperonin family. In terms of assembly, heptamer of 7 subunits arranged in a ring. Interacts with the chaperonin GroEL.

It is found in the cytoplasm. Together with the chaperonin GroEL, plays an essential role in assisting protein folding. The GroEL-GroES system forms a nano-cage that allows encapsulation of the non-native substrate proteins and provides a physical environment optimized to promote and accelerate protein folding. GroES binds to the apical surface of the GroEL ring, thereby capping the opening of the GroEL channel. In Buchnera aphidicola subsp. Pemphigus spyrothecae, this protein is Co-chaperonin GroES.